Here is a 408-residue protein sequence, read N- to C-terminus: Ubiquitin-associated domain-containing protein 1 (408 aa).

A Ubiquitin-like domain is found at 14–98 (LRLQVCTMEG…LLLIKKRAPP (85 aa)). The interval 100 to 119 (LPKMADVSAEEKRKQEQKAP) is disordered. The segment covering 108–119 (AEEKRKQEQKAP) has biased composition (basic and acidic residues). The UBA 1 domain occupies 185 to 231 (DEDEEDRVDEIALRQLTEMGFPESRAVKALRLNHMSVTQAMEWLIEH). Residues 235–275 (PAVDAPLPGQTPSEAAAEAGASSAEATAGPSSEAGGEEAKD) are disordered. The segment covering 245–268 (TPSEAAAEAGASSAEATAGPSSEA) has biased composition (low complexity). The UBA 2 domain maps to 291 to 331 (RPDPRAVIALMEMGFDEKEVVDALRVNNNQQNAACEWLLGD). One can recognise an STI1 domain in the interval 356–395 (NPVVQLGLTNPKTLLAFEDMLENPLNSTQWMNDPETGPVM).

Component of the KPC complex.

The protein localises to the cytoplasm. Its pathway is protein modification; protein ubiquitination. Its function is as follows. Non-catalytic component of the KPC complex, a E3 ubiquitin-protein ligase complex that mediates polyubiquitination of target proteins, such as CDKN1B and NFKB1. Within the KPC complex, UBAC1 acts as an adapter that promotes the transfer of target proteins that have been polyubiquitinated by RNF123/KPC1 to the 26S proteasome. The protein is Ubiquitin-associated domain-containing protein 1 (UBAC1) of Gallus gallus (Chicken).